We begin with the raw amino-acid sequence, 461 residues long: Protein transport protein HofB homolog (461 aa).

Residue 222-229 (GPTGSGKT) participates in ATP binding.

The protein belongs to the GSP E family.

The chain is Protein transport protein HofB homolog (hofB) from Escherichia coli (strain K12).